The sequence spans 912 residues: Cadherin-2 (912 aa).

Positions 1–28 are cleaved as a signal peptide; the sequence is MCRIAGTPPRILPPLALMLLAALQQAPI. Positions 29 to 164 are excised as a propeptide; that stretch reads KATCEDMLCK…DSSHLKRQKR (136 aa). 5 consecutive Cadherin domains span residues 165–272, 273–387, 388–502, 503–609, and 610–720; these read DWVI…RPEF, LHQV…PPEF, TAMT…SPYF, VPNP…DNAP, and QVNP…DVDR. Topologically, residues 165-729 are extracellular; the sequence is DWVIPPINLP…RIVGAGLGTG (565 aa). Positions 175, 231, 233, 264, 265, 266, 267, and 268 each coordinate Ca(2+). A glycan (N-linked (GlcNAc...) asparagine) is linked at N278. The Ca(2+) site is built by D298, D300, and N306. A glycan (N-linked (GlcNAc...) asparagine) is linked at N330. Position 358 (D358) interacts with Ca(2+). N-linked (GlcNAc...) asparagine glycosylation is found at N407, N578, N628, and N657. Residues 730–752 form a helical membrane-spanning segment; the sequence is AIIAILLCIIILLILVLMFVVWM. The Cytoplasmic portion of the chain corresponds to 753–912; the sequence is KRRDKERQAK…LADMYGGGDD (160 aa). Residues 869–886 are compositionally biased toward low complexity; sequence SGSTAGSLSSLNSSSSGG. The disordered stretch occupies residues 869-890; that stretch reads SGSTAGSLSSLNSSSSGGEQDY.

In terms of assembly, homodimer (via extracellular region). Can also form heterodimers with other cadherins (via extracellular region). Dimerization occurs in trans, i.e. with a cadherin chain from another cell. Interacts with CTNNA2. Expressed at intercalated disks in the heart (at protein level).

The protein resides in the cell membrane. It localises to the sarcolemma. Its subcellular location is the cell junction. It is found in the cell surface. The protein localises to the desmosome. The protein resides in the adherens junction. In terms of biological role, calcium-dependent cell adhesion protein; preferentially mediates homotypic cell-cell adhesion. Cadherins may thus contribute to the sorting of heterogeneous cell types, and thereby play an important role during embryonic development. Required for proper neurite branching, and pre- and postsynaptic organization. The chain is Cadherin-2 (CDH2) from Gallus gallus (Chicken).